The primary structure comprises 490 residues: Aspartyl/glutamyl-tRNA(Asn/Gln) amidotransferase subunit B (490 aa).

Belongs to the GatB/GatE family. GatB subfamily. As to quaternary structure, heterotrimer of A, B and C subunits.

The catalysed reaction is L-glutamyl-tRNA(Gln) + L-glutamine + ATP + H2O = L-glutaminyl-tRNA(Gln) + L-glutamate + ADP + phosphate + H(+). It catalyses the reaction L-aspartyl-tRNA(Asn) + L-glutamine + ATP + H2O = L-asparaginyl-tRNA(Asn) + L-glutamate + ADP + phosphate + 2 H(+). Its function is as follows. Allows the formation of correctly charged Asn-tRNA(Asn) or Gln-tRNA(Gln) through the transamidation of misacylated Asp-tRNA(Asn) or Glu-tRNA(Gln) in organisms which lack either or both of asparaginyl-tRNA or glutaminyl-tRNA synthetases. The reaction takes place in the presence of glutamine and ATP through an activated phospho-Asp-tRNA(Asn) or phospho-Glu-tRNA(Gln). The polypeptide is Aspartyl/glutamyl-tRNA(Asn/Gln) amidotransferase subunit B (Burkholderia vietnamiensis (strain G4 / LMG 22486) (Burkholderia cepacia (strain R1808))).